Here is a 407-residue protein sequence, read N- to C-terminus: V-set and immunoglobulin domain-containing protein 1 (407 aa).

The signal sequence occupies residues 1 to 22; sequence MMVFAFWKVFLILNCLAGQVSM. One can recognise an Ig-like V-type domain in the interval 23 to 134; that stretch reads VQVTIPDTFV…HFVGKNQGLL (112 aa). The Extracellular portion of the chain corresponds to 23 to 234; sequence VQVTIPDTFV…EIDLTSSHPE (212 aa). N-linked (GlcNAc...) asparagine glycosylation is present at Asn-39. Cystine bridges form between Cys-44/Cys-118 and Cys-163/Cys-213. The region spanning 145–229 is the Ig-like C2-type domain; it reads PFCTIQGRPE…GNSSCEIDLT (85 aa). 2 N-linked (GlcNAc...) asparagine glycosylation sites follow: Asn-202 and Asn-221. Residues 235–255 form a helical membrane-spanning segment; that stretch reads VGIIIGALVGALIGAAVIICV. Topologically, residues 256-407 are cytoplasmic; it reads VYFARNKVKS…SKAGEDTVKA (152 aa). Disordered regions lie at residues 268-289 and 318-407; these read QKNL…PQQS and TAVL…TVKA. Ser-273 and Ser-274 each carry phosphoserine. The span at 361 to 371 shows a compositional bias: acidic residues; that stretch reads DPETETEPEPE.

The protein localises to the membrane. The protein is V-set and immunoglobulin domain-containing protein 1 (Vsig1) of Mus musculus (Mouse).